A 158-amino-acid polypeptide reads, in one-letter code: UPF0758 protein VC_1786 (158 aa).

Positions 37–158 (TFARTENTTE…SVSFAERGWL (122 aa)) constitute an MPN domain. Positions 108, 110, and 121 each coordinate Zn(2+). Residues 108–121 (HNHPSGDPEPSQAD) carry the JAMM motif motif.

Belongs to the UPF0758 family.

The protein is UPF0758 protein VC_1786 of Vibrio cholerae serotype O1 (strain ATCC 39315 / El Tor Inaba N16961).